We begin with the raw amino-acid sequence, 765 residues long: Phosphoribosylformylglycinamidine synthase subunit PurL (765 aa).

The active site involves H57. ATP contacts are provided by Y60 and R104. E106 serves as a coordination point for Mg(2+). Substrate is bound by residues 107-110 (SHNH) and R129. The active-site Proton acceptor is the H108. D130 serves as a coordination point for Mg(2+). Q254 provides a ligand contact to substrate. Position 282 (D282) interacts with Mg(2+). 326–328 (ESQ) is a binding site for substrate. Residues N508 and G545 each contribute to the ATP site. Position 546 (N546) interacts with Mg(2+). S548 is a substrate binding site.

Belongs to the FGAMS family. In terms of assembly, monomer. Part of the FGAM synthase complex composed of 1 PurL, 1 PurQ and 2 PurS subunits.

The protein resides in the cytoplasm. The catalysed reaction is N(2)-formyl-N(1)-(5-phospho-beta-D-ribosyl)glycinamide + L-glutamine + ATP + H2O = 2-formamido-N(1)-(5-O-phospho-beta-D-ribosyl)acetamidine + L-glutamate + ADP + phosphate + H(+). The protein operates within purine metabolism; IMP biosynthesis via de novo pathway; 5-amino-1-(5-phospho-D-ribosyl)imidazole from N(2)-formyl-N(1)-(5-phospho-D-ribosyl)glycinamide: step 1/2. In terms of biological role, part of the phosphoribosylformylglycinamidine synthase complex involved in the purines biosynthetic pathway. Catalyzes the ATP-dependent conversion of formylglycinamide ribonucleotide (FGAR) and glutamine to yield formylglycinamidine ribonucleotide (FGAM) and glutamate. The FGAM synthase complex is composed of three subunits. PurQ produces an ammonia molecule by converting glutamine to glutamate. PurL transfers the ammonia molecule to FGAR to form FGAM in an ATP-dependent manner. PurS interacts with PurQ and PurL and is thought to assist in the transfer of the ammonia molecule from PurQ to PurL. This is Phosphoribosylformylglycinamidine synthase subunit PurL from Corynebacterium aurimucosum (strain ATCC 700975 / DSM 44827 / CIP 107346 / CN-1) (Corynebacterium nigricans).